We begin with the raw amino-acid sequence, 130 residues long: Small ribosomal subunit protein uS9 (130 aa).

It belongs to the universal ribosomal protein uS9 family.

This is Small ribosomal subunit protein uS9 from Buchnera aphidicola subsp. Acyrthosiphon pisum (strain 5A).